The chain runs to 58 residues: Large ribosomal subunit protein uL30 (58 aa).

The protein belongs to the universal ribosomal protein uL30 family. Part of the 50S ribosomal subunit.

The chain is Large ribosomal subunit protein uL30 from Novosphingobium aromaticivorans (strain ATCC 700278 / DSM 12444 / CCUG 56034 / CIP 105152 / NBRC 16084 / F199).